The following is a 206-amino-acid chain: Small ribosomal subunit protein uS5 (206 aa).

Polar residues predominate over residues 1–23 (MTDTPTKQENQSKTENPPSSNAN). Residues 1–52 (MTDTPTKQENQSKTENPPSSNANEQRRGNRNNDRKRNRRGDSKNERDSEWQE) are disordered. A compositionally biased stretch (basic and acidic residues) spans 24–52 (EQRRGNRNNDRKRNRRGDSKNERDSEWQE). Positions 50–113 (WQERVVQIRR…SDGKKHLVRV (64 aa)) constitute an S5 DRBM domain.

Belongs to the universal ribosomal protein uS5 family. As to quaternary structure, part of the 30S ribosomal subunit. Contacts proteins S4 and S8.

In terms of biological role, with S4 and S12 plays an important role in translational accuracy. Functionally, located at the back of the 30S subunit body where it stabilizes the conformation of the head with respect to the body. The polypeptide is Small ribosomal subunit protein uS5 (Prochlorococcus marinus subsp. pastoris (strain CCMP1986 / NIES-2087 / MED4)).